A 4138-amino-acid chain; its full sequence is Fumosorinone synthetase (4138 aa).

The 441-residue stretch at 15–455 (PEPIAIVGSA…GTNAHAIIER (441 aa)) folds into the Ketosynthase family 3 (KS3) domain. Residues cysteine 189, histidine 328, and histidine 375 each act as for beta-ketoacyl synthase activity in the active site. Residues 590 to 921 (VFTGQGAQWP…APDAVSFSTA (332 aa)) form a malonyl-CoA:ACP transacylase (MAT) domain region. The interval 990–1133 (HELLGRRAVD…GLIDVHLGPR (144 aa)) is N-terminal hotdog fold. The dehydratase (DH) domain stretch occupies residues 990–1306 (HELLGRRAVD…GFEVRSVGER (317 aa)). The 320-residue stretch at 990–1309 (HELLGRRAVD…VRSVGERDAA (320 aa)) folds into the PKS/mFAS DH domain. Catalysis depends on histidine 1022, which acts as the Proton acceptor; for dehydratase activity. Residues 1157 to 1309 (LQEIDCEKLY…VRSVGERDAA (153 aa)) form a C-terminal hotdog fold region. Catalysis depends on aspartate 1216, which acts as the Proton donor; for dehydratase activity. The interval 1456–1650 (RFYAEDKGMQ…FSGADHVAHD (195 aa)) is methyltransferase (MT) domain. The interval 2205–2379 (TYLMVGAAGG…AASIIHVGFV (175 aa)) is ketoreductase (KR) domain. Residues 2507 to 2587 (EAAAAVRRAF…QLSTLAAKLA (81 aa)) enclose the Carrier 1 domain. Serine 2547 carries the O-(pantetheine 4'-phosphoryl)serine modification. Residues 2587–2683 (ARQQSPRKEG…TEPKTEDKVS (97 aa)) are disordered. A compositionally biased stretch (basic and acidic residues) spans 2610–2621 (TQDKLVDDKEQK). Over residues 2622–2643 (VQVTSSLAKADSLTQEMQASAH) the composition is skewed to polar residues. Residues 2647–2659 (DSATNPTPSSTAS) show a composition bias toward low complexity. A compositionally biased stretch (polar residues) spans 2664–2675 (SNSQSTRSTSTE). The condensation (C) domain stretch occupies residues 2701-3128 (REAPMSAAQA…ASQRVRECAV (428 aa)). An adenylation (A) (KR) domain region spans residues 3162–3564 (CQKNSARTAI…DGTLLCFGRI (403 aa)). A Carrier 2 domain is found at 3680 to 3759 (EKMTIQEGEL…GMTRCVLAQR (80 aa)). Serine 3719 is modified (O-(pantetheine 4'-phosphoryl)serine). Residues 3813–4045 (LTGATGFLGG…LDFGTVDAVV (233 aa)) form a reductase (RED) domain region.

The protein in the C-terminal section; belongs to the NRP synthetase family.

In terms of biological role, hybrid PKS-NRPS synthetase; part of the gene cluster that mediates the biosynthesis of fumosorinone, a 2-pyridone alkaloid that acts as an inhibitor of protein tyrosine phosphatase 1B which is implicated asa negative regulator of insulin receptor signaling and a potential drug target for the treatment of type II diabetes and other associated metabolic syndromes. The polyketide-amino acid backbone of fumosorinone is first assembled by the PKS-NRPS hybrid fumoS. The PKS modules condense one acetyl-CoA starter unit with 7 malonyl-CoA units, programmed C-methylations occurring after the first 3 and the sixth extensions, and cycles of full reduction occurring after the first 2 extensions. Because fumoS lacks a designated enoyl reductase (ER) domain, the required activity is provided the enoyl reductase fumoC. Upon formation of the polyketide backbone on the thiotemplate, the polyketide is transferred to the NRPS module and linked to tyrosine to produce the acyltetramic acid intermediate called prefumosorinone A. The cytochrome P450 monooxygenase fumoA then probably catalyzes an unprecedented oxidative ring expansion of prefumosorinone A to form prefumosorinone B which contains the 2-pyridone core of fumosorinone. The cytochrome P450 monooxygenase fumoB might hydroxylate the nitrogen of prefumosorinone B, but not the acyltetramic acid prefumosorinone A, to form fumosorinone. This chain is Fumosorinone synthetase, found in Cordyceps fumosorosea (strain ARSEF 2679) (Isaria fumosorosea).